Consider the following 239-residue polypeptide: 1-(5-phosphoribosyl)-5-[(5-phosphoribosylamino)methylideneamino] imidazole-4-carboxamide isomerase (239 aa).

The active-site Proton acceptor is Asp-7. The active-site Proton donor is the Asp-129.

This sequence belongs to the HisA/HisF family.

It is found in the cytoplasm. The enzyme catalyses 1-(5-phospho-beta-D-ribosyl)-5-[(5-phospho-beta-D-ribosylamino)methylideneamino]imidazole-4-carboxamide = 5-[(5-phospho-1-deoxy-D-ribulos-1-ylimino)methylamino]-1-(5-phospho-beta-D-ribosyl)imidazole-4-carboxamide. The protein operates within amino-acid biosynthesis; L-histidine biosynthesis; L-histidine from 5-phospho-alpha-D-ribose 1-diphosphate: step 4/9. This chain is 1-(5-phosphoribosyl)-5-[(5-phosphoribosylamino)methylideneamino] imidazole-4-carboxamide isomerase, found in Lactiplantibacillus plantarum (strain ATCC BAA-793 / NCIMB 8826 / WCFS1) (Lactobacillus plantarum).